The following is a 1313-amino-acid chain: Ataxin-2 (1313 aa).

The span at 1–12 (MRSAAAAPRSPA) shows a compositional bias: low complexity. Residues 1–255 (MRSAAAAPRS…RNSNKGLPQS (255 aa)) are disordered. Over residues 48-65 (GPYPSAAPPPPGPGPPPS) the composition is skewed to pro residues. Low complexity-rich tracts occupy residues 104–114 (FVVLLLPLASP), 141–154 (ARPA…ACEP), 166–187 (QQQQ…QQQQ), and 204–234 (LLAS…VAAT). The segment covering 235-244 (SGGGRPGLGR) has biased composition (gly residues). Serine 248 carries the post-translational modification Phosphoserine. Residues 267-344 (RMVHILTSVV…FVVVQFKDMD (78 aa)) enclose the Sm domain. Phosphoserine occurs at positions 393, 466, 478, 508, and 554. Composition is skewed to basic and acidic residues over residues 459-471 (ALEN…EEKY) and 478-492 (SSER…RENK). 2 disordered regions span residues 459 to 954 (ALEN…HQQP) and 1137 to 1219 (NATL…NSFP). Positions 508-544 (SGRQNSPRMGQPGSGSMPSRSTSHTSDFNPNSGSDQR) are enriched in polar residues. Residues 552 to 562 (WPSPCPSPSSR) show a composition bias toward pro residues. Residues 563-581 (PPSRYQSGPNSLPPRAATP) show a composition bias toward low complexity. Positions 582–598 (TRPPSRPPSRPSRPPSH) are enriched in pro residues. The residue at position 624 (serine 624) is a Phosphoserine. Residues 627 to 637 (AQRHPRNHRVS) are compositionally biased toward basic residues. An Asymmetric dimethylarginine; alternate modification is found at arginine 640. At arginine 640 the chain carries Omega-N-methylarginine; alternate. Serine 642 carries the post-translational modification Phosphoserine. Residues 666–681 (TSPSGGTWSSVVSGVP) are compositionally biased toward low complexity. Phosphoserine is present on serine 684. Residues 693–703 (PRQNSIGNTPS) are compositionally biased toward polar residues. A Phosphoserine modification is found at serine 728. The residue at position 741 (threonine 741) is a Phosphothreonine. Residues 768 to 777 (PNETSPSFSK) are compositionally biased toward polar residues. Residues serine 772 and serine 784 each carry the phosphoserine modification. The segment covering 788 to 804 (SEHRKQIDDLKKFKNDF) has biased composition (basic and acidic residues). Polar residues predominate over residues 807–820 (QPSSTSESMDQLLN). Residues 821–844 (KNREGEKSRDLIKDKIEPSAKDSF) are compositionally biased toward basic and acidic residues. A compositionally biased stretch (low complexity) spans 847-871 (NSSSNCTSGSSKPNSPSISPSILSN). Serine 856, serine 857, serine 861, serine 865, serine 867, serine 888, and serine 889 each carry phosphoserine. A compositionally biased stretch (polar residues) spans 880-891 (VTSQGVQTSSPA). A Glycyl lysine isopeptide (Lys-Gly) (interchain with G-Cter in SUMO2) cross-link involves residue lysine 893. Residues 893–910 (KQEKDDKEEKKDAAEQVR) are compositionally biased toward basic and acidic residues. 2 stretches are compositionally biased toward low complexity: residues 925–936 (SFSQPKPSTTPT) and 1155–1192 (GQQQ…QQSA). Polar residues predominate over residues 1206-1219 (TPASNTQSPQNSFP).

The protein belongs to the ataxin-2 family. As to quaternary structure, monomer. Can also form homodimers. Interacts with TARDBP; the interaction is RNA-dependent. Interacts with RBFOX1. Interacts with polyribosomes. Interacts with SH3GL2 and SH3GL3. Interacts with SH3KBP1 and CBL. Interacts with EGFR. Interacts with ATXN2L. Expressed in the brain, heart, liver, skeletal muscle, pancreas and placenta. Isoform 1 is predominant in the brain and spinal cord. Isoform 4 is more abundant in the cerebellum. In the brain, broadly expressed in the amygdala, caudate nucleus, corpus callosum, hippocampus, hypothalamus, substantia nigra, subthalamic nucleus and thalamus.

The protein resides in the cytoplasm. Functionally, involved in EGFR trafficking, acting as negative regulator of endocytic EGFR internalization at the plasma membrane. This chain is Ataxin-2 (ATXN2), found in Homo sapiens (Human).